We begin with the raw amino-acid sequence, 77 residues long: EMBRYO SURROUNDING FACTOR 1-like protein 6 (77 aa).

The first 25 residues, 1 to 25 (MSPSHFAILFIIVISLVPLHGYANG), serve as a signal peptide directing secretion. 4 disulfides stabilise this stretch: Cys-38-Cys-53, Cys-43-Cys-72, Cys-51-Cys-68, and Cys-54-Cys-61.

This sequence belongs to the MEG family.

The chain is EMBRYO SURROUNDING FACTOR 1-like protein 6 (ESFL6) from Arabidopsis thaliana (Mouse-ear cress).